An 89-amino-acid chain; its full sequence is Dynein light chain LC6, flagellar outer arm (89 aa).

This sequence belongs to the dynein light chain family. In terms of assembly, consists of at least 3 heavy chains (alpha, beta and gamma), 2 intermediate chains and 8 light chains.

The protein resides in the cytoplasm. It localises to the cytoskeleton. The protein localises to the flagellum axoneme. This Heliocidaris crassispina (Sea urchin) protein is Dynein light chain LC6, flagellar outer arm.